A 285-amino-acid chain; its full sequence is Ribosomal protein L11 methyltransferase (285 aa).

4 residues coordinate S-adenosyl-L-methionine: T131, G154, D176, and N223.

The protein belongs to the methyltransferase superfamily. PrmA family.

It localises to the cytoplasm. The enzyme catalyses L-lysyl-[protein] + 3 S-adenosyl-L-methionine = N(6),N(6),N(6)-trimethyl-L-lysyl-[protein] + 3 S-adenosyl-L-homocysteine + 3 H(+). In terms of biological role, methylates ribosomal protein L11. This is Ribosomal protein L11 methyltransferase from Brucella suis (strain ATCC 23445 / NCTC 10510).